Consider the following 541-residue polypeptide: Tyrosine-protein kinase Yes (541 aa).

The span at M1–N20 shows a compositional bias: basic and acidic residues. Residues M1–P43 are disordered. A lipid anchor (N-myristoyl glycine) is attached at G2. C3 carries the S-palmitoyl cysteine; in membrane form lipid modification. Positions S26–S37 are enriched in low complexity. Positions G89–S150 constitute an SH3 domain. The SH2 domain maps to W156–C253. The Protein kinase domain occupies L275–F528. ATP contacts are provided by residues L281–V289 and K303. The Proton acceptor role is filled by D394. Y424 carries the phosphotyrosine; by autocatalysis modification. Residue Y535 is modified to Phosphotyrosine; by CSK.

This sequence belongs to the protein kinase superfamily. Tyr protein kinase family. SRC subfamily. Post-translationally, autophosphorylation at Tyr-424 maintains enzyme activity. Palmitoylation at Cys-3 promotes membrane localization.

The protein resides in the cell membrane. The protein localises to the cytoplasm. Its subcellular location is the cytoskeleton. It localises to the microtubule organizing center. It is found in the centrosome. The protein resides in the cytosol. The protein localises to the cell junction. It catalyses the reaction L-tyrosyl-[protein] + ATP = O-phospho-L-tyrosyl-[protein] + ADP + H(+). Its function is as follows. Non-receptor protein tyrosine kinase that is involved in the regulation of cell growth and survival, apoptosis, cell-cell adhesion, cytoskeleton remodeling, differentiation, G2/M progression and cytokinesis. In Gallus gallus (Chicken), this protein is Tyrosine-protein kinase Yes (YES1).